Consider the following 552-residue polypeptide: Putative transport protein APJL_0985 (552 aa).

5 helical membrane-spanning segments follow: residues 4–24, 29–49, 65–85, 95–115, and 161–181; these read IAII…IGHI, VGLG…CTHL, FGLI…FFAS, GFAV…HKLF, and IAYP…RIIF. 2 consecutive RCK C-terminal domains span residues 190 to 275 and 277 to 360; these read QEFD…ILGE and ADVS…IIGD. Transmembrane regions (helical) follow at residues 370-390, 403-425, 438-458, 463-483, 492-512, and 529-549; these read MLPI…PLYL, GGPL…YWFM, IVLF…DTLL, LAWM…TGFV, YLSL…LAFA, and VYPL…ILLW.

This sequence belongs to the AAE transporter (TC 2.A.81) family. YidE subfamily.

It is found in the cell membrane. In Actinobacillus pleuropneumoniae serotype 3 (strain JL03), this protein is Putative transport protein APJL_0985.